Reading from the N-terminus, the 690-residue chain is Choline transporter-like 1 (690 aa).

Residues 23-43 (IFWLVLYVVFWIALIVIAVFS) form a helical membrane-spanning segment. An N-linked (GlcNAc...) asparagine glycan is attached at N134. 4 helical membrane passes run 203 to 223 (LYKA…FSIV), 237 to 259 (WLIC…WSYY), 282 to 302 (ATIY…LVVI), and 334 to 354 (LLAF…VVCL). N391 is a glycosylation site (N-linked (GlcNAc...) asparagine). The next 4 membrane-spanning stretches (helical) occupy residues 415–435 (IYII…QLAI), 464–484 (LGSV…RLIL), 565–585 (FVLF…SILL), and 594–614 (FYMA…HIIL).

Belongs to the CTL (choline transporter-like) family.

Its subcellular location is the membrane. In Anopheles gambiae (African malaria mosquito), this protein is Choline transporter-like 1.